Consider the following 186-residue polypeptide: Ribosome-recycling factor (186 aa).

Belongs to the RRF family.

It is found in the cytoplasm. Functionally, responsible for the release of ribosomes from messenger RNA at the termination of protein biosynthesis. May increase the efficiency of translation by recycling ribosomes from one round of translation to another. In Bacteroides thetaiotaomicron (strain ATCC 29148 / DSM 2079 / JCM 5827 / CCUG 10774 / NCTC 10582 / VPI-5482 / E50), this protein is Ribosome-recycling factor.